The following is a 269-amino-acid chain: Polyamine aminopropyltransferase (269 aa).

Residues 1-226 (MVWFFEYYDG…ALWSFIIGGE (226 aa)) form the PABS domain. Glutamine 28 is an S-methyl-5'-thioadenosine binding site. Residues histidine 59 and aspartate 83 each coordinate spermidine. S-methyl-5'-thioadenosine contacts are provided by residues aspartate 102 and 133-134 (DG). Aspartate 150 (proton acceptor) is an active-site residue. Position 150–153 (150–153 (DSTD)) interacts with spermidine.

It belongs to the spermidine/spermine synthase family. In terms of assembly, homodimer or homotetramer.

It localises to the cytoplasm. The catalysed reaction is S-adenosyl 3-(methylsulfanyl)propylamine + putrescine = S-methyl-5'-thioadenosine + spermidine + H(+). The protein operates within amine and polyamine biosynthesis; spermidine biosynthesis; spermidine from putrescine: step 1/1. Catalyzes the irreversible transfer of a propylamine group from the amino donor S-adenosylmethioninamine (decarboxy-AdoMet) to putrescine (1,4-diaminobutane) to yield spermidine. The sequence is that of Polyamine aminopropyltransferase from Archaeoglobus fulgidus (strain ATCC 49558 / DSM 4304 / JCM 9628 / NBRC 100126 / VC-16).